Here is a 478-residue protein sequence, read N- to C-terminus: Cytochrome c-552 (478 aa).

An N-terminal signal peptide occupies residues 1–26 (MARKTLRARRFFSLIFPFFFITSVYA). His-94 contacts heme c. Heme contacts are provided by Cys-122, Cys-125, and Lys-126. Heme c contacts are provided by Cys-160, Cys-163, His-164, Cys-209, Cys-212, and His-213. Residues Glu-215, Tyr-216, Lys-261, and Gln-263 each contribute to the Ca(2+) site. Tyr-216 is a substrate binding site. His-264 contacts substrate. Heme c contacts are provided by His-275, Cys-282, Cys-285, His-286, His-301, Cys-314, Cys-317, His-318, and His-393.

Belongs to the cytochrome c-552 family. Ca(2+) serves as cofactor. Requires heme c as cofactor.

The protein localises to the periplasm. It carries out the reaction 6 Fe(III)-[cytochrome c] + NH4(+) + 2 H2O = 6 Fe(II)-[cytochrome c] + nitrite + 8 H(+). The protein operates within nitrogen metabolism; nitrate reduction (assimilation). Functionally, catalyzes the reduction of nitrite to ammonia, consuming six electrons in the process. This is Cytochrome c-552 from Salmonella gallinarum (strain 287/91 / NCTC 13346).